The sequence spans 301 residues: Glycine--tRNA ligase alpha subunit (301 aa).

The protein belongs to the class-II aminoacyl-tRNA synthetase family. As to quaternary structure, tetramer of two alpha and two beta subunits.

The protein resides in the cytoplasm. It carries out the reaction tRNA(Gly) + glycine + ATP = glycyl-tRNA(Gly) + AMP + diphosphate. The sequence is that of Glycine--tRNA ligase alpha subunit from Alteromonas mediterranea (strain DSM 17117 / CIP 110805 / LMG 28347 / Deep ecotype).